Reading from the N-terminus, the 438-residue chain is MYAEETNNVTAIKDIRAREILDSRGNPTIEADVILADGTIGRAAAPSGASTGSREALELRDGDKSRYMGKGVKKAVANVNSQIRSALMDKNVTAQQAIDDAMIALDGTDNKDNLGANAILAVSLAVAKAAAKSQSLPLHQYIADLRNQTSLTMPVPMMNIINGGEHADNTVDIQEFMIEPVGFSSFSEALRAGTEIFHSLKSVLKSQGLNTAVGDEGGFAPNLRSNEEAITVIMQAIEQVGYTAGKDIHLALDCAATEFYKDGKYILAGEGNKSFDSQGFSDYLVGLARQYPIISIEDGLDESDWDGWKYLTEQIGDKVQLVGDDLFVTNPAILQEGIDKHIANAILIKFNQIGTLSETLDAIYLAKKNGYATIISHRSGETEDSTIADLAVGTAAGQIKTGSLCRSDRVAKYNQLLRIEQQVRASYRGREEFIGLRG.

Gln-174 provides a ligand contact to (2R)-2-phosphoglycerate. Residue Glu-216 is the Proton donor of the active site. Asp-253, Glu-297, and Asp-324 together coordinate Mg(2+). Positions 349, 378, 379, and 400 each coordinate (2R)-2-phosphoglycerate. Residue Lys-349 is the Proton acceptor of the active site.

This sequence belongs to the enolase family. In terms of assembly, component of the RNA degradosome, a multiprotein complex involved in RNA processing and mRNA degradation. Requires Mg(2+) as cofactor.

It is found in the cytoplasm. It localises to the secreted. The protein localises to the cell surface. It catalyses the reaction (2R)-2-phosphoglycerate = phosphoenolpyruvate + H2O. The protein operates within carbohydrate degradation; glycolysis; pyruvate from D-glyceraldehyde 3-phosphate: step 4/5. In terms of biological role, catalyzes the reversible conversion of 2-phosphoglycerate (2-PG) into phosphoenolpyruvate (PEP). It is essential for the degradation of carbohydrates via glycolysis. The protein is Enolase of Psychrobacter arcticus (strain DSM 17307 / VKM B-2377 / 273-4).